The primary structure comprises 262 residues: 5-methyltetrahydrofolate:corrinoid/iron-sulfur protein co-methyltransferase (262 aa).

The Pterin-binding domain maps to 1 to 246; that stretch reads MLIIGERING…ETAATAEILL (246 aa). (6S)-5-methyl-5,6,7,8-tetrahydrofolate is bound by residues N96 and D160. A Ca(2+)-binding site is contributed by K184. Residues N199, Q202, and R207 each coordinate (6S)-5-methyl-5,6,7,8-tetrahydrofolate. 202–203 provides a ligand contact to methylcob(III)alamin; the sequence is QN. Ca(2+)-binding residues include G222 and D224.

The protein belongs to the vitamin-B12 dependent methionine synthase family. As to quaternary structure, heterohexamer composed of 2 subunits of AcsC, 2 subunits of AcsD and 2 subunits of AcsE. The cofactor is Ca(2+).

It carries out the reaction methyl-Co(III)-[corrinoid Fe-S protein] + (6S)-5,6,7,8-tetrahydrofolate = Co(I)-[corrinoid Fe-S protein] + (6S)-5-methyl-5,6,7,8-tetrahydrofolate + H(+). Methyltransferase that mediates the transfer of a N5-methyl group of (6S)-methyltetrahydrofolate to the 5-methoxybenzimidazolylcobamide cofactor of a corrinoid/Fe-S protein (AcsC/AcsD) in the anaerobic acetyl-CoA pathway (Wood-Ljungdahl pathway) of carbon monoxide and carbon dioxide fixation. This chain is 5-methyltetrahydrofolate:corrinoid/iron-sulfur protein co-methyltransferase (acsE), found in Moorella thermoacetica (Clostridium thermoaceticum).